The chain runs to 494 residues: Glutamyl-tRNA(Gln) amidotransferase subunit A (494 aa).

Residues lysine 81 and serine 156 each act as charge relay system in the active site. The active-site Acyl-ester intermediate is serine 180.

Belongs to the amidase family. GatA subfamily. In terms of assembly, heterotrimer of A, B and C subunits.

It catalyses the reaction L-glutamyl-tRNA(Gln) + L-glutamine + ATP + H2O = L-glutaminyl-tRNA(Gln) + L-glutamate + ADP + phosphate + H(+). Functionally, allows the formation of correctly charged Gln-tRNA(Gln) through the transamidation of misacylated Glu-tRNA(Gln) in organisms which lack glutaminyl-tRNA synthetase. The reaction takes place in the presence of glutamine and ATP through an activated gamma-phospho-Glu-tRNA(Gln). This Mycobacterium bovis (strain ATCC BAA-935 / AF2122/97) protein is Glutamyl-tRNA(Gln) amidotransferase subunit A.